A 186-amino-acid chain; its full sequence is Elongation factor P (186 aa).

The protein belongs to the elongation factor P family.

It localises to the cytoplasm. Its pathway is protein biosynthesis; polypeptide chain elongation. In terms of biological role, involved in peptide bond synthesis. Stimulates efficient translation and peptide-bond synthesis on native or reconstituted 70S ribosomes in vitro. Probably functions indirectly by altering the affinity of the ribosome for aminoacyl-tRNA, thus increasing their reactivity as acceptors for peptidyl transferase. The polypeptide is Elongation factor P (Prochlorococcus marinus (strain MIT 9515)).